Reading from the N-terminus, the 532-residue chain is MSVTVETPLQAGPLLKEKKQELIDIKNIQEHARTVQPFKASKHQPLISGSVSKEAAIATHAALHIDLTPEKEKKIREMYDRLDADNDGSIDIRDLTQALSSQTPHIPATMAPKLLAKMKREDSDRVTYADFTNYVIAHEARLAEVFDQIDSNRDGEVDVSEIKSYCKEMGVNLDDHKALSIVKKMDQSGSSSVNLNEFQDFMLLYPSTDMREMVDFWRHNLIIDIGEDGQVPEDFTPQELQSGVWWRHLVAGGVAGAMSRTCTAPFDRIKVYLQVNSTKTNKLGVVSCVHLLHAEGGLKSFWRGNGINVIKIAPESAMKFMSYDQIKRWIQEYKGGAELTTYERLFAGSSAGAISQTAIYPMEVMKTRLALRRTGQLDRGMIHFAHKMYDKEGIRCFYKGYLPNLLGIIPYAGIDLTVYETLKSCYTQYYTEHTEPGVLALLACGTCSSTCGQLASYPLALVRTRLQARAISPKNSSQPDTMIGQFKHILQNEGFTGLYRGITPNFMKVIPAVSISYVVYEKVRKQLGATMS.

EF-hand domains lie at 70–105 (EKEK…QTPH), 107–136 (PATM…NYVI), 137–172 (AHEA…MGVN), and 173–208 (LDDH…YPST). Positions 83, 85, 87, 89, and 94 each coordinate Ca(2+). Ca(2+) contacts are provided by D150, N152, D154, E156, and E161. 3 Solcar repeats span residues 243–329 (GVWW…IKRW), 339–425 (LTTY…LKSC), and 436–526 (PGVL…VRKQ). Transmembrane regions (helical) follow at residues 249–266 (LVAG…TAPF), 304–323 (GNGI…FMSY), 349–362 (SSAG…IYPM), 400–419 (GYLP…LTVY), 442–459 (LACG…SYPL), and 501–518 (GITP…ISYV).

Belongs to the mitochondrial carrier (TC 2.A.29) family.

The protein resides in the mitochondrion inner membrane. Functionally, calcium-dependent mitochondrial solute carrier. The protein is Probable calcium-binding mitochondrial carrier CBG00135 of Caenorhabditis briggsae.